The sequence spans 374 residues: Trichodiene synthase (374 aa).

Residues D100, E164, N225, S229, E233, D239, and I241 each coordinate Mg(2+). Residues 100-104 (DDSKD) are aspartate-rich domain.

It belongs to the trichodiene synthase family. Mg(2+) serves as cofactor. It depends on Mn(2+) as a cofactor.

It catalyses the reaction (2E,6E)-farnesyl diphosphate = trichodiene + diphosphate. The protein operates within sesquiterpene biosynthesis; trichothecene biosynthesis. With respect to regulation, benzyl triethylammonium cation (BTAC) acts as a competitive inhibitor of trichodiene synthase reaction in the presence of pyrophosphate (PPi). Its function is as follows. Trichodiene synthase; part of the core gene cluster that mediates the biosynthesis of trichothecenes, a very large family of chemically related bicyclic sesquiterpene compounds acting as mycotoxins, including T2-toxin. The biosynthesis of trichothecenes begins with the cyclization of farnesyl diphosphate to trichodiene and is catalyzed by the trichodiene synthase TRI5. Trichodiene undergoes a series of oxygenations catalyzed by the cytochrome P450 monooxygenase TRI4. TRI4 controls the addition of four oxygens at C-2, C-3, C-11, and the C-12, C-13-epoxide to form the intermediate isotrichotriol. Isotrichotriol then undergoes a non-enzymatic isomerization and cyclization to form isotrichodermol. During this process, the oxygen at the C-2 position becomes the pyran ring oxygen and the hydroxyl group at C-11 is lost. More complex type A trichothecenes are built by modifying isotrichodermol through a series of paired hydroxylation and acetylation or acylation steps. Isotrichodermol is converted to isotrichodermin by the acetyltransferase TRI101. TRI101 encodes a C-3 transacetylase that acts as a self-protection or resistance factor during biosynthesis and that the presence of a free C-3 hydroxyl group is a key component of Fusarium trichothecene phytotoxicity. A second hydroxyl group is added to C-15 by the trichothecene C-15 hydroxylase TRI11, producing 15-decalonectrin, which is then acetylated by TRI3, producing calonectrin. A third hydroxyl group is added at C-4 by the cytochrome P450 monooxygenase TRI13, converting calonectrin to 3,15-diacetoxyspirpenol, which is subsequently acetylated by the acetyltransferase TRI7. A fourth hydroxyl group is added to C-8 by the cytochrome P450 monooxygenase TRI1, followed by the addition of an isovaleryl moiety by TRI16. Finally, the acetyl group is removed from the C-3 position by the trichothecene C-3 esterase TRI8 to produce T-2 toxin. This Fusarium sporotrichioides protein is Trichodiene synthase.